A 200-amino-acid chain; its full sequence is MLLTIIDKFIQIVLGYLLSDFIMGIYHWIKDTYFSPFTPIIGKTFIWGSRLHHVRPRYVLEFTDKDLIIDSAKWTLSWIGPLFFWFGLTPFLVTMFIMISLNDVIHKYTHEIDHERPMWATILQRIGFFQSHDEHHLHHIAPHEINYCPVTPYVNIWLEKINLWRKLESFVEYLTGVKPRAKEYEFVEDEKYPAGIRFLE.

Helical transmembrane passes span 9–29 (FIQI…YHWI) and 79–99 (IGPL…FIMI).

Belongs to the fatty acid desaturase CarF family.

The protein resides in the membrane. This Acanthamoeba polyphaga mimivirus (APMV) protein is Probable fatty acid desaturase MIMI_L630.